The sequence spans 122 residues: LYR motif-containing protein 1 (122 aa).

This sequence belongs to the complex I LYR family.

This Xenopus laevis (African clawed frog) protein is LYR motif-containing protein 1 (lyrm1).